A 668-amino-acid polypeptide reads, in one-letter code: Chitin synthase 8 (668 aa).

The span at 1–26 (MTSRMPTSGHRTSSSSSERGNMSVQQ) shows a compositional bias: polar residues. Residues 1–62 (MTSRMPTSGH…PAPLRPGWTL (62 aa)) are disordered. 3 N-linked (GlcNAc...) asparagine glycosylation sites follow: Asn21, Asn98, and Asn101. 2 consecutive transmembrane segments (helical) span residues 136–156 (WSLI…GWKY) and 162–182 (FFLV…ICII). Residues Asn216 and Asn476 are each glycosylated (N-linked (GlcNAc...) asparagine). 4 helical membrane-spanning segments follow: residues 522–542 (WALG…IILI), 548–568 (LIAV…VELL), 583–603 (VFLG…CIGF), and 615–635 (YFAG…IILV).

It belongs to the chitin synthase family. Class VIII subfamily.

The protein localises to the cell membrane. It localises to the cell septum. It carries out the reaction [(1-&gt;4)-N-acetyl-beta-D-glucosaminyl](n) + UDP-N-acetyl-alpha-D-glucosamine = [(1-&gt;4)-N-acetyl-beta-D-glucosaminyl](n+1) + UDP + H(+). Polymerizes chitin, a structural polymer of the cell wall and septum, by transferring the sugar moiety of UDP-GlcNAc to the non-reducing end of the growing chitin polymer. Participated in the development of cell wall and plays a critical role in fungal response to environmental stresses. Necessary for pathogenicity and deoxinivalenol (DON) production. The polypeptide is Chitin synthase 8 (Gibberella zeae (strain ATCC MYA-4620 / CBS 123657 / FGSC 9075 / NRRL 31084 / PH-1) (Wheat head blight fungus)).